We begin with the raw amino-acid sequence, 85 residues long: Large ribosomal subunit protein bL27 (85 aa).

Residues 1–24 (MAHKKAGGSSRNGRDSNSKRLGVK) are disordered.

Belongs to the bacterial ribosomal protein bL27 family.

This chain is Large ribosomal subunit protein bL27, found in Nitrosospira multiformis (strain ATCC 25196 / NCIMB 11849 / C 71).